A 239-amino-acid chain; its full sequence is Probable transcriptional regulatory protein EF_2866 (239 aa).

It belongs to the TACO1 family. YeeN subfamily.

The protein resides in the cytoplasm. The protein is Probable transcriptional regulatory protein EF_2866 of Enterococcus faecalis (strain ATCC 700802 / V583).